Reading from the N-terminus, the 134-residue chain is uncharacterized protein (134 aa).

Helical transmembrane passes span 8–28, 54–74, and 113–133; these read FTSL…TVMY, GFQA…TFLL, and LACF…RLVD.

The protein belongs to the cornichon family.

It is found in the endoplasmic reticulum membrane. This is an uncharacterized protein from Schizosaccharomyces pombe (strain 972 / ATCC 24843) (Fission yeast).